The primary structure comprises 138 residues: MKPAERRKARHLALQAIYQWQLAKDNVADIVEQFKLEQPTKGVDLPYFELLLTGVVNNVTNLDATFSPFLSRKLDDLDQIDKGVLRLACYELTYCKDVPYKVVINEAIELAKAFATDDSHKFVNGVLDKVVKQMGLRQ.

Belongs to the NusB family.

Its function is as follows. Involved in transcription antitermination. Required for transcription of ribosomal RNA (rRNA) genes. Binds specifically to the boxA antiterminator sequence of the ribosomal RNA (rrn) operons. The chain is Transcription antitermination protein NusB from Tolumonas auensis (strain DSM 9187 / NBRC 110442 / TA 4).